The chain runs to 338 residues: Phenylalanine--tRNA ligase alpha subunit (338 aa).

Residue E253 coordinates Mg(2+).

Belongs to the class-II aminoacyl-tRNA synthetase family. Phe-tRNA synthetase alpha subunit type 1 subfamily. In terms of assembly, tetramer of two alpha and two beta subunits. Requires Mg(2+) as cofactor.

It is found in the cytoplasm. It catalyses the reaction tRNA(Phe) + L-phenylalanine + ATP = L-phenylalanyl-tRNA(Phe) + AMP + diphosphate + H(+). In Legionella pneumophila (strain Paris), this protein is Phenylalanine--tRNA ligase alpha subunit.